The primary structure comprises 429 residues: 3-phosphoshikimate 1-carboxyvinyltransferase (429 aa).

Residues Lys-25, Ser-26, and Arg-30 each contribute to the 3-phosphoshikimate site. Residue Lys-25 participates in phosphoenolpyruvate binding. Phosphoenolpyruvate contacts are provided by Gly-99 and Arg-127. Positions 173, 174, 175, 201, 317, 340, and 344 each coordinate 3-phosphoshikimate. Gln-175 provides a ligand contact to phosphoenolpyruvate. The active-site Proton acceptor is Asp-317. The phosphoenolpyruvate site is built by Arg-348, Arg-390, and Lys-415.

It belongs to the EPSP synthase family. As to quaternary structure, monomer.

The protein localises to the cytoplasm. It catalyses the reaction 3-phosphoshikimate + phosphoenolpyruvate = 5-O-(1-carboxyvinyl)-3-phosphoshikimate + phosphate. The protein operates within metabolic intermediate biosynthesis; chorismate biosynthesis; chorismate from D-erythrose 4-phosphate and phosphoenolpyruvate: step 6/7. Its function is as follows. Catalyzes the transfer of the enolpyruvyl moiety of phosphoenolpyruvate (PEP) to the 5-hydroxyl of shikimate-3-phosphate (S3P) to produce enolpyruvyl shikimate-3-phosphate and inorganic phosphate. In Pseudoalteromonas atlantica (strain T6c / ATCC BAA-1087), this protein is 3-phosphoshikimate 1-carboxyvinyltransferase.